Consider the following 179-residue polypeptide: Thiol-disulfide oxidoreductase ResA (179 aa).

The chain crosses the membrane as a helical; Signal-anchor for type II membrane protein span at residues 11-30; the sequence is TGILLVLICALGYTIYNAVF. Residues 36-174 enclose the Thioredoxin domain; that stretch reads ISEGSDAPNF…IHDYMNLIKP (139 aa). An intrachain disulfide couples C74 to C77.

Belongs to the thioredoxin family. ResA subfamily.

The protein resides in the cell membrane. The protein operates within protein modification; cytochrome c assembly. Functionally, thiol-disulfide oxidoreductase which is required in disulfide reduction during c-type cytochrome synthesis. May accept reducing equivalents from CcdA, leading to breakage of disulfide bonds in apocytochrome c; following this reduction heme can be covalently attached. Does not play a role in sporulation. The chain is Thiol-disulfide oxidoreductase ResA (resA) from Bacillus subtilis (strain 168).